Here is a 598-residue protein sequence, read N- to C-terminus: Biotin-dependent acyl-coenzyme A carboxylase alpha3 subunit (598 aa).

Residues 8–452 (RIAKVLVANR…SFSVHTRWIE (445 aa)) form the Biotin carboxylation domain. The ATP-grasp domain occupies 127 to 324 (RHIAARAQAP…LVLQQFKIAN (198 aa)). Residue 155-216 (AKEHGVPIAI…ERYLDKPRHV (62 aa)) participates in ATP binding. Glu282, Glu295, and Asn297 together coordinate Mg(2+). Mn(2+) contacts are provided by Glu282, Glu295, and Asn297. The interval 506–531 (PAGVIRKKPKPRKRGGHTGAATSGDA) is disordered. Residues 510–521 (IRKKPKPRKRGG) are compositionally biased toward basic residues. One can recognise a Biotinyl-binding domain in the interval 522-598 (HTGAATSGDA…TQGTVLAEIK (77 aa)). At Lys564 the chain carries N6-biotinyllysine.

The biotin-dependent acyl-CoA carboxylase complex is composed of AccA3, which contains the biotin carboxylase (BC) and biotin carboxyl carrier protein (BCCP) domains, and an AccD protein, which contains the carboxyl transferase (CT) domain. Mg(2+) serves as cofactor. The cofactor is Mn(2+). Requires biotin as cofactor.

The enzyme catalyses N(6)-biotinyl-L-lysyl-[protein] + hydrogencarbonate + ATP = N(6)-carboxybiotinyl-L-lysyl-[protein] + ADP + phosphate + H(+). The protein operates within lipid metabolism; fatty acid biosynthesis. It functions in the pathway lipid metabolism; mycolic acid biosynthesis. Its function is as follows. Component of a biotin-dependent acyl-CoA carboxylase complex. This subunit catalyzes the ATP-dependent carboxylation of the biotin carried by the biotin carboxyl carrier (BCC) domain, resulting in the formation of carboxyl biotin. The protein is Biotin-dependent acyl-coenzyme A carboxylase alpha3 subunit (bccA) of Mycobacterium leprae (strain TN).